We begin with the raw amino-acid sequence, 529 residues long: Bifunctional purine biosynthesis protein PurH (529 aa).

Positions 1 to 148 constitute an MGS-like domain; sequence MQQRRPIRRA…KNHKDVAIVV (148 aa). K287 bears the N6-acetyllysine mark.

It belongs to the PurH family.

The catalysed reaction is (6R)-10-formyltetrahydrofolate + 5-amino-1-(5-phospho-beta-D-ribosyl)imidazole-4-carboxamide = 5-formamido-1-(5-phospho-D-ribosyl)imidazole-4-carboxamide + (6S)-5,6,7,8-tetrahydrofolate. It catalyses the reaction IMP + H2O = 5-formamido-1-(5-phospho-D-ribosyl)imidazole-4-carboxamide. Its pathway is purine metabolism; IMP biosynthesis via de novo pathway; 5-formamido-1-(5-phospho-D-ribosyl)imidazole-4-carboxamide from 5-amino-1-(5-phospho-D-ribosyl)imidazole-4-carboxamide (10-formyl THF route): step 1/1. The protein operates within purine metabolism; IMP biosynthesis via de novo pathway; IMP from 5-formamido-1-(5-phospho-D-ribosyl)imidazole-4-carboxamide: step 1/1. This Escherichia coli O139:H28 (strain E24377A / ETEC) protein is Bifunctional purine biosynthesis protein PurH.